We begin with the raw amino-acid sequence, 461 residues long: Vimentin (461 aa).

2 stretches are compositionally biased toward low complexity: residues 1 to 14 (MNRTTSRQTTSSSS) and 35 to 52 (SSRQYSSPVRSSRMSYSV). The tract at residues 1–52 (MNRTTSRQTTSSSSYKRMFGGEGRPSVGMARSTLSSRQYSSPVRSSRMSYSV) is disordered. A head region spans residues 1 to 91 (MNRTTSRQTT…FALSDAINSE (91 aa)). Residues 92 to 127 (FKANRTNEKAEMQHLNDRFASYIDKVRFLEQQNKIL) are coil 1A. Residues 92–127 (FKANRTNEKAEMQHLNDRFASYIDKVRFLEQQNKIL) adopt a coiled-coil conformation. An IF rod domain is found at 99–407 (EKAEMQHLND…KLLEGEESRI (309 aa)). The interval 128–149 (LAELEQLKGKGASRIGDLYEDE) is linker 1. A coiled-coil region spans residues 150-241 (MRDLRRQVDQ…KLHDEEVAEL (92 aa)). A coil 1B region spans residues 150–241 (MRDLRRQVDQ…KLHDEEVAEL (92 aa)). The segment at 242–264 (QAQIQDQHVQIDMDVAKPDLTAA) is linker 12. The coil 2 stretch occupies residues 265-403 (LRDVRVQYET…ATYRKLLEGE (139 aa)). The stretch at 299–403 (NRNTDAIRQA…ATYRKLLEGE (105 aa)) forms a coiled coil. The tract at residues 404–461 (ESRITTPMPNFSSFNLRESMLEARPMIDNLSKKVVIKTIETRDGHVINESTQNHDDLE) is tail.

This sequence belongs to the intermediate filament family. Homomer assembled from elementary dimers. Post-translationally, one of the most prominent phosphoproteins in various cells of mesenchymal origin. Phosphorylation is enhanced during cell division, at which time vimentin filaments are significantly reorganized.

The protein resides in the cytoplasm. It localises to the cytoskeleton. The protein localises to the nucleus matrix. Functionally, vimentins are class-III intermediate filaments found in various non-epithelial cells, especially mesenchymal cells. Vimentin is attached to the nucleus, endoplasmic reticulum, and mitochondria, either laterally or terminally. The protein is Vimentin (vim) of Oncorhynchus mykiss (Rainbow trout).